Consider the following 955-residue polypeptide: Vacuolar membrane protease (955 aa).

At 1-16 (MASLRLPRANPLAFTR) the chain is on the cytoplasmic side. A helical membrane pass occupies residues 17–37 (WPVTVITAIVYLALLIPLLVV). Over 38–390 (HHVVPSAPSS…STFVLFQLHT (353 aa)) the chain is Vacuolar. 2 N-linked (GlcNAc...) asparagine glycosylation sites follow: Asn53 and Asn119. Residues His174 and Asp186 each coordinate Zn(2+). Glu220 (proton acceptor) is an active-site residue. Residues Glu221, Glu246, and His319 each contribute to the Zn(2+) site. Residues 391–411 (LFALLVTLLIVGPLTLLFTSI) traverse the membrane as a helical segment. The Cytoplasmic segment spans residues 412 to 442 (ALTKADKMYLFRSSAKSEDRLDVVPLQGLRG). The helical transmembrane segment at 443–463 (FFRFPFLFGIPTVVTVGLAYL) threads the bilayer. Topologically, residues 464–473 (VTKVNPYIIH) are vacuolar. The chain crosses the membrane as a helical span at residues 474–494 (SSAYAVWSMMVAAWVFLAWFV). The Cytoplasmic portion of the chain corresponds to 495–508 (SRVADFARPSAFHR). Residues 509 to 529 (IYTLTWMYVLSWVSAVIATVY) form a helical membrane-spanning segment. Topologically, residues 530–533 (ANQR) are vacuolar. Residues 534-554 (GLAGGYFIFFFHAGIFLAKWI) traverse the membrane as a helical segment. The Cytoplasmic portion of the chain corresponds to 555–656 (SYLELFALPS…WSYALPKWTW (102 aa)). Over residues 574-590 (SASGRASGHGSRRGTTS) the composition is skewed to low complexity. The segment at 574-611 (SASGRASGHGSRRGTTSGEDDGEEAEEEPTESTSLLGS) is disordered. The segment covering 591-603 (GEDDGEEAEEEPT) has biased composition (acidic residues). A helical transmembrane segment spans residues 657–677 (VLQLLLTAPITLIMVGPLALL). The Vacuolar portion of the chain corresponds to 678–693 (TISAISQTGQDGGHPL). Residues 694–714 (FAYVAIAIFTTIMLTPLLPFI) form a helical membrane-spanning segment. Over 715–721 (HRYTYHV) the chain is Cytoplasmic. The helical transmembrane segment at 722-742 (PLFLLAVFLGTLIYNLVAFPF) threads the bilayer. Topologically, residues 743 to 955 (SDSNRLKLYY…RRAFEIGNDD (213 aa)) are vacuolar. N-linked (GlcNAc...) asparagine glycosylation is present at Asn826.

It belongs to the peptidase M28 family. Requires Zn(2+) as cofactor.

The protein localises to the vacuole membrane. Functionally, may be involved in vacuolar sorting and osmoregulation. The sequence is that of Vacuolar membrane protease from Aspergillus oryzae (strain ATCC 42149 / RIB 40) (Yellow koji mold).